The chain runs to 778 residues: DNA topoisomerase 1 (778 aa).

Residues 1–141 (MNSSDEEDIA…ETPEEDQGYK (141 aa)) are disordered. Over residues 17-26 (KSSSITSAST) the composition is skewed to low complexity. 2 stretches are compositionally biased toward basic and acidic residues: residues 71-83 (VKTE…EPKS) and 100-121 (EKTT…ESKT). Over residues 122–131 (QSDSQASVKS) the composition is skewed to polar residues. 3 interaction with DNA regions span residues 367–368 (KY), 430–435 (RAGGEK), and 522–524 (TAK). The region spanning 374 to 778 (NSSVKGQSDF…IESADENWRF (405 aa)) is the Topo IB-type catalytic domain. Tyr736 acts as the O-(3'-phospho-DNA)-tyrosine intermediate in catalysis.

It belongs to the type IB topoisomerase family.

It catalyses the reaction ATP-independent breakage of single-stranded DNA, followed by passage and rejoining.. Releases the supercoiling and torsional tension of DNA introduced during the DNA replication and transcription by transiently cleaving and rejoining one strand of the DNA duplex. Introduces a single-strand break via transesterification at a target site in duplex DNA. The scissile phosphodiester is attacked by the catalytic tyrosine of the enzyme, resulting in the formation of a DNA-(3'-phosphotyrosyl)-enzyme intermediate and the expulsion of a 5'-OH DNA strand. The free DNA strand then rotates around the intact phosphodiester bond on the opposing strand, thus removing DNA supercoils. Finally, in the religation step, the DNA 5'-OH attacks the covalent intermediate to expel the active-site tyrosine and restore the DNA phosphodiester backbone. The protein is DNA topoisomerase 1 (TOP1) of Candida albicans (Yeast).